Here is a 505-residue protein sequence, read N- to C-terminus: Glutamyl-tRNA(Gln) amidotransferase subunit B, mitochondrial (505 aa).

The protein belongs to the GatB/GatE family. GatB subfamily. In terms of assembly, subunit of the heterotrimeric GatCAB amidotransferase (AdT) complex, composed of A, B and C subunits.

The protein resides in the mitochondrion. It catalyses the reaction L-glutamyl-tRNA(Gln) + L-glutamine + ATP + H2O = L-glutaminyl-tRNA(Gln) + L-glutamate + ADP + phosphate + H(+). Its function is as follows. Allows the formation of correctly charged Gln-tRNA(Gln) through the transamidation of misacylated Glu-tRNA(Gln) in the mitochondria. The reaction takes place in the presence of glutamine and ATP through an activated gamma-phospho-Glu-tRNA(Gln). The polypeptide is Glutamyl-tRNA(Gln) amidotransferase subunit B, mitochondrial (Schizosaccharomyces japonicus (strain yFS275 / FY16936) (Fission yeast)).